We begin with the raw amino-acid sequence, 153 residues long: Arginine repressor (153 aa).

It belongs to the ArgR family.

It localises to the cytoplasm. The protein operates within amino-acid biosynthesis; L-arginine biosynthesis [regulation]. Regulates arginine biosynthesis genes. The sequence is that of Arginine repressor from Actinobacillus pleuropneumoniae serotype 5b (strain L20).